The sequence spans 383 residues: uncharacterized protein (383 aa).

A helical transmembrane segment spans residues 6–26; the sequence is LFLFSCLYFIGGNLKALVLGI. One can recognise an ATP-grasp domain in the interval 131 to 303; it reads YKKLKNLGFN…LAMVLLNNKY (173 aa).

Its subcellular location is the membrane. This is an uncharacterized protein from Methanocaldococcus jannaschii (strain ATCC 43067 / DSM 2661 / JAL-1 / JCM 10045 / NBRC 100440) (Methanococcus jannaschii).